A 628-amino-acid polypeptide reads, in one-letter code: Inactive sodium-dependent neutral amino acid transporter B(0)AT3 (628 aa).

Residues methionine 1–glutamine 26 lie on the Cytoplasmic side of the membrane. Residues tyrosine 27–leucine 47 traverse the membrane as a helical segment. The Extracellular segment spans residues cysteine 48–tyrosine 51. The helical transmembrane segment at glycine 52 to valine 74 threads the bilayer. Residues glutamate 75 to glycine 88 are Cytoplasmic-facing. A helical transmembrane segment spans residues valine 89–isoleucine 111. Topologically, residues serine 112–serine 178 are extracellular. Residues asparagine 144, asparagine 168, and asparagine 174 are each glycosylated (N-linked (GlcNAc...) asparagine). Residues isoleucine 179–glycine 201 traverse the membrane as a helical segment. Topologically, residues isoleucine 202–lysine 207 are cytoplasmic. The chain crosses the membrane as a helical span at residues valine 208–leucine 230. Residues proline 231 to valine 253 are Extracellular-facing. The chain crosses the membrane as a helical span at residues tryptophan 254 to alanine 276. Over serine 277–aspartate 288 the chain is Cytoplasmic. A helical membrane pass occupies residues alanine 289–leucine 311. Over glycine 312 to alanine 399 the chain is Extracellular. Asparagine 354 carries an N-linked (GlcNAc...) asparagine glycan. Residues proline 400–valine 422 traverse the membrane as a helical segment. Over glutamate 423 to glutamate 442 the chain is Cytoplasmic. Residues alanine 443–asparagine 465 traverse the membrane as a helical segment. Topologically, residues tyrosine 466–phenylalanine 474 are extracellular. Residues alanine 475–methionine 497 traverse the membrane as a helical segment. The Cytoplasmic portion of the chain corresponds to lysine 498–arginine 517. The chain crosses the membrane as a helical span at residues leucine 518 to tryptophan 540. Topologically, residues lysine 541–arginine 568 are extracellular. The helical transmembrane segment at alanine 569–leucine 591 threads the bilayer. At threonine 592–arginine 628 the chain is on the cytoplasmic side. The interval aspartate 602–arginine 628 is disordered.

It belongs to the sodium:neurotransmitter symporter (SNF) (TC 2.A.22) family. SLC6A18 subfamily. In terms of tissue distribution, abundantly expressed in kidney, but not in intestine.

The protein localises to the membrane. In terms of biological role, does not show neutral amino acid transporter activity. This is Inactive sodium-dependent neutral amino acid transporter B(0)AT3 from Homo sapiens (Human).